Consider the following 135-residue polypeptide: Protein cornichon homolog 1 (135 aa).

3 helical membrane passes run 2–22, 51–71, and 111–131; these read VFVWLTAFFLVVALIVLVIYQ, FVLQAALSVLFLLSGHWAMFL, and IVGLIILLFLSLFWMIWTVLL.

It belongs to the cornichon family. Interacts with HKT1;3.

It localises to the endoplasmic reticulum membrane. Its subcellular location is the golgi apparatus membrane. Its function is as follows. Acts as a cargo receptor necessary for the transportation of the cation transporter HKT1;3 and possibly other secretory proteins from the endoplasmic reticulum (ER) in COPII-coated vesicles targeted to the Golgi apparatus. This chain is Protein cornichon homolog 1, found in Oryza sativa subsp. japonica (Rice).